We begin with the raw amino-acid sequence, 842 residues long: Elongation factor G, mitochondrial (842 aa).

Residues 1 to 58 (MVAIPRVAAARSLARQLARQSLRTTSFASAPVRIAIASTPLARSPSSFRSLSSSTRRS) constitute a mitochondrion transit peptide. Residues 93-398 (VRQRNVGISA…GVCSYLPNPA (306 aa)) enclose the tr-type G domain. GTP contacts are provided by residues 102–109 (AHIDSGKT), 196–200 (DTPGH), and 250–253 (NKMD). The tract at residues 423–442 (AGEDQEAAAEARKNAAPPVL) is disordered.

This sequence belongs to the TRAFAC class translation factor GTPase superfamily. Classic translation factor GTPase family. EF-G/EF-2 subfamily.

The protein localises to the mitochondrion. The protein operates within protein biosynthesis; polypeptide chain elongation. Functionally, mitochondrial GTPase that catalyzes the GTP-dependent ribosomal translocation step during translation elongation. During this step, the ribosome changes from the pre-translocational (PRE) to the post-translocational (POST) state as the newly formed A-site-bound peptidyl-tRNA and P-site-bound deacylated tRNA move to the P and E sites, respectively. Catalyzes the coordinated movement of the two tRNA molecules, the mRNA and conformational changes in the ribosome. This Mycosarcoma maydis (Corn smut fungus) protein is Elongation factor G, mitochondrial.